Reading from the N-terminus, the 264-residue chain is uncharacterized protein (264 aa).

13-20 (TGSTSGIG) lines the NADP(+) pocket. Ser141 lines the substrate pocket. Tyr154 serves as the catalytic Proton acceptor.

Belongs to the short-chain dehydrogenases/reductases (SDR) family.

This is an uncharacterized protein from Bacillus subtilis (strain 168).